The primary structure comprises 209 residues: MTGKKRSASSSRWLQEHFSDKYVQQAQKKGLRSRAWFKLDEIQQSDKIFKPGMTVVDLGAAPGGWSQYVVTQIGGAGRIIACDLLPMDPIVGVDFLQGDFRDELVMKALLERVGDSKVQVVMSDMAPNMSGTPAVDIPRAMYLVELALEMCRDVLAPGGSFVVKVFQGEGFDEYLREIRSLFTKVKVRKPDSSRARSREVYIVATGRKL.

S-adenosyl-L-methionine is bound by residues Gly-63, Trp-65, Asp-83, Asp-99, and Asp-124. The active-site Proton acceptor is Lys-164.

It belongs to the class I-like SAM-binding methyltransferase superfamily. RNA methyltransferase RlmE family.

The protein localises to the cytoplasm. It catalyses the reaction uridine(2552) in 23S rRNA + S-adenosyl-L-methionine = 2'-O-methyluridine(2552) in 23S rRNA + S-adenosyl-L-homocysteine + H(+). In terms of biological role, specifically methylates the uridine in position 2552 of 23S rRNA at the 2'-O position of the ribose in the fully assembled 50S ribosomal subunit. The protein is Ribosomal RNA large subunit methyltransferase E of Cronobacter sakazakii (strain ATCC BAA-894) (Enterobacter sakazakii).